We begin with the raw amino-acid sequence, 729 residues long: Fatty acid oxidation complex subunit alpha (729 aa).

The tract at residues 1-189 (MLYKGDTLYL…KIGLVDGVVK (189 aa)) is enoyl-CoA hydratase/isomerase. D296 contacts substrate. A 3-hydroxyacyl-CoA dehydrogenase region spans residues 311–729 (ETPKQAAVLG…ARPVGDLKTA (419 aa)). Residues M324, D343, 400–402 (VVE), K407, and S429 contribute to the NAD(+) site. H450 serves as the catalytic For 3-hydroxyacyl-CoA dehydrogenase activity. Position 453 (N453) interacts with NAD(+). Residues N500 and Y660 each coordinate substrate. Residues 708–729 (RHNEPYYPPVEPARPVGDLKTA) form a disordered region.

In the N-terminal section; belongs to the enoyl-CoA hydratase/isomerase family. It in the C-terminal section; belongs to the 3-hydroxyacyl-CoA dehydrogenase family. Heterotetramer of two alpha chains (FadB) and two beta chains (FadA).

It carries out the reaction a (3S)-3-hydroxyacyl-CoA + NAD(+) = a 3-oxoacyl-CoA + NADH + H(+). The catalysed reaction is a (3S)-3-hydroxyacyl-CoA = a (2E)-enoyl-CoA + H2O. It catalyses the reaction a 4-saturated-(3S)-3-hydroxyacyl-CoA = a (3E)-enoyl-CoA + H2O. The enzyme catalyses (3S)-3-hydroxybutanoyl-CoA = (3R)-3-hydroxybutanoyl-CoA. It carries out the reaction a (3Z)-enoyl-CoA = a 4-saturated (2E)-enoyl-CoA. The catalysed reaction is a (3E)-enoyl-CoA = a 4-saturated (2E)-enoyl-CoA. It functions in the pathway lipid metabolism; fatty acid beta-oxidation. Involved in the aerobic and anaerobic degradation of long-chain fatty acids via beta-oxidation cycle. Catalyzes the formation of 3-oxoacyl-CoA from enoyl-CoA via L-3-hydroxyacyl-CoA. It can also use D-3-hydroxyacyl-CoA and cis-3-enoyl-CoA as substrate. The polypeptide is Fatty acid oxidation complex subunit alpha (Shigella flexneri serotype 5b (strain 8401)).